The chain runs to 96 residues: ESAT-6-like protein SAG0230 (96 aa).

The protein belongs to the WXG100 family. sagEsxA-like subfamily. As to quaternary structure, homodimer.

This is ESAT-6-like protein SAG0230 from Streptococcus agalactiae serotype V (strain ATCC BAA-611 / 2603 V/R).